A 569-amino-acid polypeptide reads, in one-letter code: Glutamate--tRNA ligase, chloroplastic/mitochondrial (569 aa).

L-glutamate is bound at residue 59–61; it reads RFA. The short motif at 62-72 is the 'HIGH' region element; that stretch reads PSPTGNLHVGG. Residue H69 participates in ATP binding. Residues E95, 247-251, and R265 contribute to the L-glutamate site; that span reads YNFCV. Residues E268 and 303–307 contribute to the ATP site; that span reads KLSKR. Positions 303–307 match the 'KMSKS' region motif; sequence KLSKR.

The protein belongs to the class-I aminoacyl-tRNA synthetase family. Glutamate--tRNA ligase type 1 subfamily.

It is found in the plastid. It localises to the chloroplast. The protein localises to the mitochondrion. The enzyme catalyses tRNA(Glu) + L-glutamate + ATP = L-glutamyl-tRNA(Glu) + AMP + diphosphate. Catalyzes the attachment of glutamate to tRNA(Glu) in a two-step reaction: glutamate is first activated by ATP to form Glu-AMP and then transferred to the acceptor end of tRNA(Glu). The protein is Glutamate--tRNA ligase, chloroplastic/mitochondrial of Nicotiana tabacum (Common tobacco).